The primary structure comprises 227 residues: Protein SSO0193 (227 aa).

An AMMECR1 domain is found at 15–209 (EIGRLLIEIA…ETKPNGSDII (195 aa)).

The sequence is that of Protein SSO0193 from Saccharolobus solfataricus (strain ATCC 35092 / DSM 1617 / JCM 11322 / P2) (Sulfolobus solfataricus).